The following is a 165-amino-acid chain: 2-C-methyl-D-erythritol 2,4-cyclodiphosphate synthase (165 aa).

Positions 13 and 15 each coordinate a divalent metal cation. Residues 13–15 and 39–40 each bind 4-CDP-2-C-methyl-D-erythritol 2-phosphate; these read DRH and HS. Histidine 47 contacts a divalent metal cation. Residues 61–63 and phenylalanine 141 each bind 4-CDP-2-C-methyl-D-erythritol 2-phosphate; that span reads DIG.

This sequence belongs to the IspF family. In terms of assembly, homotrimer. Requires a divalent metal cation as cofactor.

The catalysed reaction is 4-CDP-2-C-methyl-D-erythritol 2-phosphate = 2-C-methyl-D-erythritol 2,4-cyclic diphosphate + CMP. It participates in isoprenoid biosynthesis; isopentenyl diphosphate biosynthesis via DXP pathway; isopentenyl diphosphate from 1-deoxy-D-xylulose 5-phosphate: step 4/6. Functionally, involved in the biosynthesis of isopentenyl diphosphate (IPP) and dimethylallyl diphosphate (DMAPP), two major building blocks of isoprenoid compounds. Catalyzes the conversion of 4-diphosphocytidyl-2-C-methyl-D-erythritol 2-phosphate (CDP-ME2P) to 2-C-methyl-D-erythritol 2,4-cyclodiphosphate (ME-CPP) with a corresponding release of cytidine 5-monophosphate (CMP). The polypeptide is 2-C-methyl-D-erythritol 2,4-cyclodiphosphate synthase (Thermotoga maritima (strain ATCC 43589 / DSM 3109 / JCM 10099 / NBRC 100826 / MSB8)).